Consider the following 246-residue polypeptide: Eukaryotic translation initiation factor 6 (246 aa).

Residues serine 174 and serine 175 each carry the phosphoserine; by CK1 modification.

Belongs to the eIF-6 family. Monomer. Associates with the 60S ribosomal subunit. Phosphorylation at Ser-174 and Ser-175 promotes nuclear export.

The protein localises to the cytoplasm. It localises to the nucleus. Its subcellular location is the nucleolus. Its function is as follows. Binds to the 60S ribosomal subunit and prevents its association with the 40S ribosomal subunit to form the 80S initiation complex in the cytoplasm. Is also involved in ribosome biogenesis. Associates with pre-60S subunits in the nucleus and is involved in its nuclear export. This Sordaria macrospora (strain ATCC MYA-333 / DSM 997 / K(L3346) / K-hell) protein is Eukaryotic translation initiation factor 6.